We begin with the raw amino-acid sequence, 650 residues long: SUMO-activating enzyme subunit 2 (650 aa).

Residues 25 to 30, D49, 57 to 60, K73, 96 to 97, and 118 to 123 contribute to the ATP site; these read GAGGIG, NLNR, SI, and DNRAAR. Zn(2+) is bound by residues C159 and C162. The Glycyl thioester intermediate role is filled by C174. K191 participates in a covalent cross-link: Glycyl lysine isopeptide (Lys-Gly) (interchain with G-Cter in SUMO). A Glycyl lysine isopeptide (Lys-Gly) (interchain with G-Cter in SUMO1) cross-link involves residue K237. Glycyl lysine isopeptide (Lys-Gly) (interchain with G-Cter in SUMO) cross-links involve residues K258, K282, and K286. Positions 446 and 449 each coordinate Zn(2+). The segment at 554–650 is disordered; the sequence is DAPDKAPAPS…DDDEDIIALD (97 aa). Positions 572–586 are enriched in polar residues; the sequence is ANGNKDSAQPSTSSK. Residues 590–603 show a composition bias toward acidic residues; that stretch reads EDDDVLLVDSDEEP. S599 bears the Phosphoserine mark. Glycyl lysine isopeptide (Lys-Gly) (interchain with G-Cter in SUMO) cross-links involve residues K618 and K630. Residues 638-650 are compositionally biased toward acidic residues; it reads PADDDDEDIIALD.

It belongs to the ubiquitin-activating E1 family. In terms of assembly, heterodimer of sae1 and uba2/sae2. The heterodimer corresponds to the two domains that are encoded on a single polypeptide chain in ubiquitin-activating enzyme E1. Interacts with ube2i. Sumoylated with SUMO1 and SUMO2/3 and by UBC9. Sumoylation at Lys-237 inhibits enzymatic activity. Sumoylation at the C-terminal lysine cluster plays an essential role in nuclear trafficking. Expressed in eye, brain and pectoral fins.

The protein localises to the cytoplasm. It localises to the nucleus. Its pathway is protein modification; protein sumoylation. Functionally, the heterodimer acts as an E1 ligase for sumo1, sumo2, and sumo3. It mediates ATP-dependent activation of sumo proteins followed by formation of a thioester bond between a sumo protein and a conserved active site cysteine residue on uba2/sae2. This Danio rerio (Zebrafish) protein is SUMO-activating enzyme subunit 2 (uba2).